Here is a 499-residue protein sequence, read N- to C-terminus: RNA polymerase sigma factor SigA (499 aa).

Composition is skewed to basic residues over residues 1–12 (MSSPKKNFKKPQ) and 77–87 (KKRRGRKPKHA). Disordered stretches follow at residues 1-25 (MSSPKKNFKKPQPKTENQKQALNEE) and 68-89 (QENKESDVPKKRRGRKPKHAPL). The tract at residues 252 to 322 (LVTSNLRLVV…TRAIADQART (71 aa)) is sigma-70 factor domain-2. Positions 276 to 279 (DLIQ) match the Interaction with polymerase core subunit RpoC motif. The segment at 331 to 412 (ETINRLAKAE…DTDAQMPDEF (82 aa)) is sigma-70 factor domain-3. The tract at residues 425-480 (LLNNCLSEQEELIVRMRIGMPPYNETKTLDEVSQKIKIPREKIRQIETKAIRKLRQ) is sigma-70 factor domain-4. The segment at residues 453–472 (LDEVSQKIKIPREKIRQIET) is a DNA-binding region (H-T-H motif).

Belongs to the sigma-70 factor family. RpoD/SigA subfamily. As to quaternary structure, interacts transiently with the RNA polymerase catalytic core.

The protein localises to the cytoplasm. Functionally, sigma factors are initiation factors that promote the attachment of RNA polymerase to specific initiation sites and are then released. This sigma factor is the primary sigma factor during exponential growth. The sequence is that of RNA polymerase sigma factor SigA from Mycoplasma pneumoniae (strain ATCC 29342 / M129 / Subtype 1) (Mycoplasmoides pneumoniae).